The chain runs to 609 residues: Arginine--tRNA ligase (609 aa).

Residues 132–142 (ANPTSSLHVGH) carry the 'HIGH' region motif.

This sequence belongs to the class-I aminoacyl-tRNA synthetase family. In terms of assembly, monomer.

The protein resides in the cytoplasm. The enzyme catalyses tRNA(Arg) + L-arginine + ATP = L-arginyl-tRNA(Arg) + AMP + diphosphate. The sequence is that of Arginine--tRNA ligase from Psychrobacter sp. (strain PRwf-1).